The sequence spans 305 residues: Protoheme IX farnesyltransferase 1 (305 aa).

9 helical membrane passes run 30 to 50 (IGIV…AFQF), 59 to 79 (LDVI…SGAM), 108 to 128 (FVLT…FAAS), 129 to 149 (FAAG…YSMW), 154 to 176 (HVSN…FAAV), 180 to 202 (LGPG…FYAL), 232 to 252 (LFWI…GIGF), 253 to 273 (LTLA…GFTA), and 284 to 304 (FIYS…FAVF).

It belongs to the UbiA prenyltransferase family. Protoheme IX farnesyltransferase subfamily. Interacts with CtaA.

The protein resides in the cell membrane. It carries out the reaction heme b + (2E,6E)-farnesyl diphosphate + H2O = Fe(II)-heme o + diphosphate. The protein operates within porphyrin-containing compound metabolism; heme O biosynthesis; heme O from protoheme: step 1/1. Converts heme B (protoheme IX) to heme O by substitution of the vinyl group on carbon 2 of heme B porphyrin ring with a hydroxyethyl farnesyl side group. The chain is Protoheme IX farnesyltransferase 1 from Lysinibacillus sphaericus (strain C3-41).